The chain runs to 172 residues: Female-specific lacrimal gland protein (172 aa).

The signal sequence occupies residues 1 to 16 (MVKFLLLALALGVSCA). 2 disulfide bridges follow: C60-C64 and C79-C170.

It belongs to the calycin superfamily. Lipocalin family. In terms of tissue distribution, expressed in the lacrimal gland from where it is secreted into tears (at protein level).

It is found in the secreted. This Mesocricetus auratus (Golden hamster) protein is Female-specific lacrimal gland protein.